The sequence spans 306 residues: N-acetylmuramic acid 6-phosphate etherase (306 aa).

Residues 55 to 218 (IVPRMKKGGR…STGVMIKLGK (164 aa)) enclose the SIS domain. Residue Glu-83 is the Proton donor of the active site. Glu-114 is a catalytic residue.

The protein belongs to the GCKR-like family. MurNAc-6-P etherase subfamily. Homodimer.

It catalyses the reaction N-acetyl-D-muramate 6-phosphate + H2O = N-acetyl-D-glucosamine 6-phosphate + (R)-lactate. It functions in the pathway amino-sugar metabolism; N-acetylmuramate degradation. Its function is as follows. Specifically catalyzes the cleavage of the D-lactyl ether substituent of MurNAc 6-phosphate, producing GlcNAc 6-phosphate and D-lactate. The polypeptide is N-acetylmuramic acid 6-phosphate etherase (Caldanaerobacter subterraneus subsp. tengcongensis (strain DSM 15242 / JCM 11007 / NBRC 100824 / MB4) (Thermoanaerobacter tengcongensis)).